Here is a 116-residue protein sequence, read N- to C-terminus: U30-theraphotoxin-Cg1a (116 aa).

The first 17 residues, 1–17 (MKLCVLTIASLLVTVTS), serve as a signal peptide directing secretion. The propeptide occupies 18–53 (LETQKEIAEGSELTREETPSLVEHKEDEAAAASEKR). The interval 24–46 (IAEGSELTREETPSLVEHKEDEA) is disordered. 4 disulfides stabilise this stretch: C55/C69, C62/C75, C66/C112, and C68/C88.

The protein belongs to the neurotoxin 03 (Tx2) family. 02 subfamily. HNTX-XV sub-subfamily. As to expression, expressed by the venom gland.

It is found in the secreted. Functionally, probable ion channel inhibitor. This Chilobrachys guangxiensis (Chinese earth tiger tarantula) protein is U30-theraphotoxin-Cg1a.